Reading from the N-terminus, the 425-residue chain is Serine--tRNA ligase (425 aa).

230–232 (TAE) contributes to the L-serine binding site. 261–263 (RSE) provides a ligand contact to ATP. Residue Glu284 coordinates L-serine. Position 348-351 (348-351 (EISS)) interacts with ATP. Ser384 serves as a coordination point for L-serine.

The protein belongs to the class-II aminoacyl-tRNA synthetase family. Type-1 seryl-tRNA synthetase subfamily. Homodimer. The tRNA molecule binds across the dimer.

Its subcellular location is the cytoplasm. The catalysed reaction is tRNA(Ser) + L-serine + ATP = L-seryl-tRNA(Ser) + AMP + diphosphate + H(+). It catalyses the reaction tRNA(Sec) + L-serine + ATP = L-seryl-tRNA(Sec) + AMP + diphosphate + H(+). Its pathway is aminoacyl-tRNA biosynthesis; selenocysteinyl-tRNA(Sec) biosynthesis; L-seryl-tRNA(Sec) from L-serine and tRNA(Sec): step 1/1. Its function is as follows. Catalyzes the attachment of serine to tRNA(Ser). Is also able to aminoacylate tRNA(Sec) with serine, to form the misacylated tRNA L-seryl-tRNA(Sec), which will be further converted into selenocysteinyl-tRNA(Sec). This is Serine--tRNA ligase from Streptococcus pyogenes serotype M2 (strain MGAS10270).